A 491-amino-acid polypeptide reads, in one-letter code: Zinc finger and SCAN domain-containing protein 22 (491 aa).

A Phosphoserine modification is found at Ser9. The region spanning 49–131 (RLRFRHFRYE…VLVEDLTQVL (83 aa)) is the SCAN box domain. Disordered stretches follow at residues 134–161 (RGWDPGAEPTEASCKQSDLGESEPSNVT) and 204–249 (FKKT…DKFD). Over residues 214–224 (VPTDQRGRESG) the composition is skewed to basic and acidic residues. Residues 225 to 241 (ASRNSSSAWPNLTSQEK) are compositionally biased toward polar residues. 8 consecutive C2H2-type zinc fingers follow at residues 268 to 290 (SKCRECRKMFQSASALEAHQKTH), 296 to 318 (YACSECGKAFSRSTHLAQHQVVH), 324 to 346 (HECKECGKAFSRVTHLTQHQRIH), 352 to 374 (YKCGECGKTFSRSTHLTQHQRVH), 380 to 402 (YECDACGKAFSQSTHLTQHQRIH), 408 to 430 (YKCDACGRAFSDCSALIRHLRIH), 436 to 458 (YQCKVCPKAFAQSSSLIEHQRIH), and 464 to 486 (YKCSDCGKAFSRSSALMVHLRIH). A Glycyl lysine isopeptide (Lys-Gly) (interchain with G-Cter in SUMO2) cross-link involves residue Lys443.

It belongs to the krueppel C2H2-type zinc-finger protein family.

It is found in the nucleus. May be involved in transcriptional regulation. This Homo sapiens (Human) protein is Zinc finger and SCAN domain-containing protein 22 (ZSCAN22).